A 455-amino-acid polypeptide reads, in one-letter code: F-box/LRR-repeat protein At5g35995 (455 aa).

The 48-residue stretch at 4-51 (RDFISSLPDEVLGKKILSLLPTKLVVSTSVLSKRWRNLFHFVDSFDLE) folds into the F-box domain. 5 LRR repeats span residues 114 to 138 (DHYL…SYRT), 152 to 176 (FPAL…LISG), 282 to 305 (IRNV…CYTM), 308 to 324 (FDKL…ENGW), and 325 to 348 (QALP…LLHK).

The chain is F-box/LRR-repeat protein At5g35995 from Arabidopsis thaliana (Mouse-ear cress).